We begin with the raw amino-acid sequence, 1397 residues long: Ankyrin repeat domain-containing protein 30A (1397 aa).

6 ANK repeats span residues 72 to 101 (QKRT…QLDV), 105 to 134 (EHRT…DINL), 138 to 167 (YGNT…VIEV), 171 to 200 (ASLT…NANA), 204 to 233 (YKCT…DVFA), and 237 to 271 (CGVT…HQNT). Positions 267-279 (NHQNTNPEGTSAG) are enriched in polar residues. 4 disordered regions span residues 267–376 (NHQN…TWPA), 453–482 (PTKE…EYSC), 782–807 (QTLR…WDSE), and 902–931 (TLRA…LRET). Basic and acidic residues-rich tracts occupy residues 290–304 (RTPD…KTPD) and 312–326 (RTPD…KTPD). A compositionally biased stretch (polar residues) spans 455–467 (KESSTKASANDQR). Composition is skewed to basic and acidic residues over residues 782 to 800 (QTLR…KDYE) and 913 to 931 (SKQK…LRET). 2 coiled-coil regions span residues 998 to 1188 (VLKK…KQDK) and 1282 to 1327 (EHAQ…FQLQ).

In terms of tissue distribution, mainly expressed in breast and testis. A very faint signal is detected in placenta. Also expressed in many breast cancer cells.

The protein is Ankyrin repeat domain-containing protein 30A (ANKRD30A) of Homo sapiens (Human).